Reading from the N-terminus, the 65-residue chain is MFKLGVLLTICLLLFSLNAVPLDGDQPADQPAERLLDDISFENNPFYDPAKRCCRTCFGCTPCCG.

Residues 1–19 (MFKLGVLLTICLLLFSLNA) form the signal peptide. The propeptide occupies 20 to 50 (VPLDGDQPADQPAERLLDDISFENNPFYDPA). 3 disulfides stabilise this stretch: Cys53/Cys64, Cys54/Cys60, and Cys57/Cys63. Pro62 carries the 4-hydroxyproline; partial modification. Residue Cys64 is modified to Cysteine amide.

The hydroxylation at Pro-62 is observed in PubMed:15924437, PubMed:19380747 and PubMed:22709442, and the non-hydroxylation is described in PubMed:22709442. In terms of tissue distribution, expressed by the venom duct.

The protein resides in the secreted. In terms of biological role, causes scratching in mice. This Conus textile (Cloth-of-gold cone) protein is Conotoxin tx3c.